Consider the following 31-residue polypeptide: Potassium channel toxin alpha-KTx 19.2 (31 aa).

3 disulfides stabilise this stretch: Cys3–Cys22, Cys8–Cys27, and Cys12–Cys29.

The protein belongs to the short scorpion toxin superfamily. Potassium channel inhibitor family. Alpha-KTx 19 subfamily. As to quaternary structure, monomer. As to expression, expressed by the venom gland.

It is found in the secreted. Blocks voltage-gated potassium channels rKv1.1/KCNA1, rKv1.2/KCNA2, hKv1.3/KCNA3, rKv1.6/KCNA6 (IC(50)=75.9 nM) and, to a lesser extent, Shaker IR (with the inactivation domain removed). This chain is Potassium channel toxin alpha-KTx 19.2, found in Buthus occitanus tunetanus (Common European scorpion).